The sequence spans 153 residues: ORM1-like protein 1 (153 aa).

The Cytoplasmic segment spans residues 1-26 (MNVGVAHSEVNPNTRVMNSRGMWLTY). 2 helical membrane-spanning segments follow: residues 27 to 46 (ALGV…FSVP) and 47 to 67 (VAWT…LHAV). Topologically, residues 68–100 (KGTPFETPDQGKARLLTHWEQLDYGVQFTSSRK) are cytoplasmic. The chain crosses the membrane as a helical span at residues 101–121 (FLTISPIILYFLASFYTKYDP). The Extracellular segment spans residues 122-123 (TH). A helical membrane pass occupies residues 124–144 (FFINTASLLSVLIPKLPQLHG). The Cytoplasmic segment spans residues 145–153 (VRIFGINKY).

The protein belongs to the ORM family. In terms of assembly, ceramide-sensitive subunit of the serine palmitoyltransferase (SPT) complex, which is also composed of SPTLC1, SPTLC2/3 and SPTSSA/B.

Its subcellular location is the endoplasmic reticulum membrane. In terms of biological role, plays an essential role in the homeostatic regulation of sphingolipid de novo biosynthesis by modulating the activity of the serine palmitoyltransferase (SPT) in response to ceramide levels. When complexed to SPT, the binding of ceramides to its N-terminus stabilizes a conformation that block SPT substrate entry, hence preventing SPT catalytic activity. Through this mechanism, maintains ceramide levels at sufficient concentrations for the production of complex sphingolipids, but which prevents the accumulation of ceramides to levels that trigger apoptosis. In Xenopus laevis (African clawed frog), this protein is ORM1-like protein 1 (ormdl1).